The chain runs to 346 residues: Phosphoribosylformylglycinamidine cyclo-ligase (346 aa).

The protein belongs to the AIR synthase family.

The protein localises to the cytoplasm. It carries out the reaction 2-formamido-N(1)-(5-O-phospho-beta-D-ribosyl)acetamidine + ATP = 5-amino-1-(5-phospho-beta-D-ribosyl)imidazole + ADP + phosphate + H(+). Its pathway is purine metabolism; IMP biosynthesis via de novo pathway; 5-amino-1-(5-phospho-D-ribosyl)imidazole from N(2)-formyl-N(1)-(5-phospho-D-ribosyl)glycinamide: step 2/2. In Vibrio campbellii (strain ATCC BAA-1116), this protein is Phosphoribosylformylglycinamidine cyclo-ligase.